A 379-amino-acid chain; its full sequence is Cobalt-precorrin-5B C(1)-methyltransferase (379 aa).

This sequence belongs to the CbiD family.

The catalysed reaction is Co-precorrin-5B + S-adenosyl-L-methionine = Co-precorrin-6A + S-adenosyl-L-homocysteine. Its pathway is cofactor biosynthesis; adenosylcobalamin biosynthesis; cob(II)yrinate a,c-diamide from sirohydrochlorin (anaerobic route): step 6/10. Catalyzes the methylation of C-1 in cobalt-precorrin-5B to form cobalt-precorrin-6A. This Salmonella typhi protein is Cobalt-precorrin-5B C(1)-methyltransferase.